We begin with the raw amino-acid sequence, 204 residues long: dTTP/UTP pyrophosphatase (204 aa).

Asp76 functions as the Proton acceptor in the catalytic mechanism.

This sequence belongs to the Maf family. YhdE subfamily. It depends on a divalent metal cation as a cofactor.

It is found in the cytoplasm. The enzyme catalyses dTTP + H2O = dTMP + diphosphate + H(+). It catalyses the reaction UTP + H2O = UMP + diphosphate + H(+). Nucleoside triphosphate pyrophosphatase that hydrolyzes dTTP and UTP. May have a dual role in cell division arrest and in preventing the incorporation of modified nucleotides into cellular nucleic acids. This is dTTP/UTP pyrophosphatase from Salinibacter ruber (strain DSM 13855 / M31).